The sequence spans 155 residues: Ribosomal RNA large subunit methyltransferase H (155 aa).

S-adenosyl-L-methionine is bound by residues Leu72, Gly103, and 122 to 127 (LSPLTL).

Belongs to the RNA methyltransferase RlmH family. As to quaternary structure, homodimer.

It is found in the cytoplasm. The catalysed reaction is pseudouridine(1915) in 23S rRNA + S-adenosyl-L-methionine = N(3)-methylpseudouridine(1915) in 23S rRNA + S-adenosyl-L-homocysteine + H(+). Specifically methylates the pseudouridine at position 1915 (m3Psi1915) in 23S rRNA. The polypeptide is Ribosomal RNA large subunit methyltransferase H (Histophilus somni (strain 2336) (Haemophilus somnus)).